A 292-amino-acid chain; its full sequence is Phosphatidylserine decarboxylase proenzyme (292 aa).

Residues aspartate 92, histidine 149, and serine 256 each act as charge relay system; for autoendoproteolytic cleavage activity in the active site. The active-site Schiff-base intermediate with substrate; via pyruvic acid; for decarboxylase activity is the serine 256. Serine 256 carries the post-translational modification Pyruvic acid (Ser); by autocatalysis.

Belongs to the phosphatidylserine decarboxylase family. PSD-B subfamily. Prokaryotic type I sub-subfamily. In terms of assembly, heterodimer of a large membrane-associated beta subunit and a small pyruvoyl-containing alpha subunit. The cofactor is pyruvate. Is synthesized initially as an inactive proenzyme. Formation of the active enzyme involves a self-maturation process in which the active site pyruvoyl group is generated from an internal serine residue via an autocatalytic post-translational modification. Two non-identical subunits are generated from the proenzyme in this reaction, and the pyruvate is formed at the N-terminus of the alpha chain, which is derived from the carboxyl end of the proenzyme. The autoendoproteolytic cleavage occurs by a canonical serine protease mechanism, in which the side chain hydroxyl group of the serine supplies its oxygen atom to form the C-terminus of the beta chain, while the remainder of the serine residue undergoes an oxidative deamination to produce ammonia and the pyruvoyl prosthetic group on the alpha chain. During this reaction, the Ser that is part of the protease active site of the proenzyme becomes the pyruvoyl prosthetic group, which constitutes an essential element of the active site of the mature decarboxylase.

Its subcellular location is the cell membrane. It carries out the reaction a 1,2-diacyl-sn-glycero-3-phospho-L-serine + H(+) = a 1,2-diacyl-sn-glycero-3-phosphoethanolamine + CO2. It functions in the pathway phospholipid metabolism; phosphatidylethanolamine biosynthesis; phosphatidylethanolamine from CDP-diacylglycerol: step 2/2. Functionally, catalyzes the formation of phosphatidylethanolamine (PtdEtn) from phosphatidylserine (PtdSer). The polypeptide is Phosphatidylserine decarboxylase proenzyme (Baumannia cicadellinicola subsp. Homalodisca coagulata).